The chain runs to 1401 residues: Protein dispatched homolog 2 (1401 aa).

Disordered stretches follow at residues 1-91 (MDGD…LAPA) and 113-138 (DRAALCSHGSSLSPSPAPSQRDGTWK). The helical transmembrane segment at 170-190 (VAVLMLCLAVIFLCTLAGLLG) threads the bilayer. N-linked (GlcNAc...) asparagine glycosylation occurs at asparagine 239. Positions 241–264 (SSSHNTLRPAPRGSAQESAVRPRR) are disordered. N-linked (GlcNAc...) asparagine glycans are attached at residues asparagine 349 and asparagine 465. The 173-residue stretch at 471-643 (GMDLGLKQEL…LVWLPASAVL (173 aa)) folds into the SSD domain. Transmembrane regions (helical) follow at residues 484–504 (FLVQDTVYPLLALVAIFFGMA), 510–530 (LFLTLMVLLGVLGSLLVAFFL), 542–562 (FVNLAALLLLSSVCANHTLIF), 589–609 (FGYLLLVSGLTTSAAFYASYL), 617–637 (CLALFMGTAVLVHLALTLVWL), 704–724 (YIWICWFAALAAGGAYIAGVS), 964–984 (PAVVLGLALALAFATLLLGTW), 990–1010 (LFSVAAVAGTVLLTVGLLVLL), 1019–1039 (ALFLSASVGLSVDFTVNYCIS), 1064–1084 (AVGAAALFAAGVLMLPATVLL), and 1088–1108 (LGIILMMVKCVSCGFASFFFQ). Disordered stretches follow at residues 1169–1192 (ARRRSPSFDTSTATSKLSHRPSVL), 1229–1337 (PALQ…NGKR), and 1352–1401 (SLPA…GYSS). Over residues 1175–1184 (SFDTSTATSK) the composition is skewed to polar residues. The span at 1259-1270 (PLPASPEAPAHS) shows a compositional bias: low complexity. A compositionally biased stretch (polar residues) spans 1284-1305 (SSASTLEGLSVSDETCLSTSEP). Residues 1352-1362 (SLPASHHSSLS) are compositionally biased toward low complexity. Omega-N-methylarginine is present on arginine 1366.

The protein belongs to the dispatched family.

It is found in the membrane. The sequence is that of Protein dispatched homolog 2 from Homo sapiens (Human).